We begin with the raw amino-acid sequence, 967 residues long: RNA polymerase-associated protein RapA (967 aa).

The region spanning 163-333 (EVGKRHNPRV…FARLRLLDPN (171 aa)) is the Helicase ATP-binding domain. Residue 176–183 (DEVGLGKT) participates in ATP binding. Residues 279 to 282 (DEAH) carry the DEAH box motif. The Helicase C-terminal domain occupies 489-660 (RVEWLLGFLT…NYLAQPNELG (172 aa)).

It belongs to the SNF2/RAD54 helicase family. RapA subfamily. As to quaternary structure, interacts with the RNAP. Has a higher affinity for the core RNAP than for the holoenzyme. Its ATPase activity is stimulated by binding to RNAP.

Its function is as follows. Transcription regulator that activates transcription by stimulating RNA polymerase (RNAP) recycling in case of stress conditions such as supercoiled DNA or high salt concentrations. Probably acts by releasing the RNAP, when it is trapped or immobilized on tightly supercoiled DNA. Does not activate transcription on linear DNA. Probably not involved in DNA repair. This Proteus mirabilis (strain HI4320) protein is RNA polymerase-associated protein RapA.